The following is a 207-amino-acid chain: MIOREX complex component 11 (207 aa).

The N-terminal 46 residues, Met1–Phe46, are a transit peptide targeting the mitochondrion. The Mitochondrial matrix segment spans residues Ile47–Ser98. Residues Phe99–Tyr119 form a helical membrane-spanning segment. Topologically, residues Asn120–Pro177 are mitochondrial intermembrane. Residues Val178–Phe198 form a helical membrane-spanning segment. Topologically, residues Gln199–Lys207 are mitochondrial matrix.

The protein belongs to the MRX11 family. In terms of assembly, associates with the mitochondrial ribosome.

It is found in the mitochondrion. It localises to the mitochondrion inner membrane. Functionally, component of MIOREX complexes, large expressome-like assemblies of ribosomes with factors involved in all the steps of post-transcriptional gene expression. In Saccharomyces cerevisiae (strain ATCC 204508 / S288c) (Baker's yeast), this protein is MIOREX complex component 11.